We begin with the raw amino-acid sequence, 356 residues long: Dihydroorotate dehydrogenase (quinone) (356 aa).

Residues 66–70 and Thr90 each bind FMN; that span reads AGFDK. Lys70 contributes to the substrate binding site. 115–119 provides a ligand contact to substrate; it reads NRMGF. 2 residues coordinate FMN: Asn143 and Asn176. Residue Asn176 participates in substrate binding. Ser179 serves as the catalytic Nucleophile. Residue Asn181 coordinates substrate. FMN contacts are provided by Lys212 and Thr240. 241-242 lines the substrate pocket; that stretch reads NT. FMN-binding positions include Gly266, Gly295, and 316–317; that span reads YT.

Belongs to the dihydroorotate dehydrogenase family. Type 2 subfamily. As to quaternary structure, monomer. It depends on FMN as a cofactor.

The protein localises to the cell membrane. The catalysed reaction is (S)-dihydroorotate + a quinone = orotate + a quinol. It functions in the pathway pyrimidine metabolism; UMP biosynthesis via de novo pathway; orotate from (S)-dihydroorotate (quinone route): step 1/1. Functionally, catalyzes the conversion of dihydroorotate to orotate with quinone as electron acceptor. The sequence is that of Dihydroorotate dehydrogenase (quinone) from Rhodococcus opacus (strain B4).